We begin with the raw amino-acid sequence, 448 residues long: High mobility group B protein 15 (448 aa).

Residues 29–120 (VADPRLFMTS…LLNNYEQIYF (92 aa)) form the ARID domain. A compositionally biased stretch (polar residues) spans 219–236 (PQQSHGVLPNTLNISANP). Disordered stretches follow at residues 219-270 (PQQS…RSGY), 333-352 (KKNGQLISNAVPLQQRLPEQ), and 366-448 (VEED…AEQN). The span at 244-255 (TKRRRRRKKSEI) shows a compositional bias: basic residues. Residues 263-330 (PKPNRSGYNF…RYRTEMEDYR (68 aa)) constitute a DNA-binding region (HMG box). Residues 389 to 398 (SIETDPELEE) show a composition bias toward acidic residues. Over residues 399–412 (PSLNPSGPNLNPNP) the composition is skewed to low complexity.

Belongs to the HMGB family.

It localises to the nucleus. In terms of biological role, binds preferentially DNA with A/T-rich content. The protein is High mobility group B protein 15 (HMGB15) of Arabidopsis thaliana (Mouse-ear cress).